A 403-amino-acid polypeptide reads, in one-letter code: Alkaline protease 1 (403 aa).

The signal sequence occupies residues 1-21; sequence MQSIKRTLLLLGAILPAVLGA. Positions 22–125 are excised as a propeptide; the sequence is PVQETRRAAE…QIYYLDGLTT (104 aa). One can recognise an Inhibitor I9 domain in the interval 36 to 120; it reads KYIVTFKPGI…YVEEDQIYYL (85 aa). In terms of domain architecture, Peptidase S8 spans 130–403; that stretch reads PWGLGSISHK…PNLLAYNGNA (274 aa). Active-site charge relay system residues include aspartate 162 and histidine 193. The N-linked (GlcNAc...) asparagine glycan is linked to asparagine 253. Catalysis depends on serine 349, which acts as the Charge relay system.

Belongs to the peptidase S8 family.

It is found in the secreted. It carries out the reaction Hydrolysis of proteins with broad specificity, and of Bz-Arg-OEt &gt; Ac-Tyr-OEt. Does not hydrolyze peptide amides.. In terms of biological role, secreted alkaline protease that allows assimilation of proteinaceous substrates. This chain is Alkaline protease 1 (alp1), found in Aspergillus flavus (strain ATCC 200026 / FGSC A1120 / IAM 13836 / NRRL 3357 / JCM 12722 / SRRC 167).